Consider the following 507-residue polypeptide: ATP synthase subunit alpha, mitochondrial (507 aa).

171–178 (GDRQTGKT) is a binding site for ATP.

This sequence belongs to the ATPase alpha/beta chains family. F-type ATPases have 2 components, CF(1) - the catalytic core - and CF(0) - the membrane proton channel. CF(1) has five subunits: alpha(3), beta(3), gamma(1), delta(1), epsilon(1). CF(0) has three main subunits: a, b and c.

Its subcellular location is the mitochondrion. It is found in the mitochondrion inner membrane. In terms of biological role, mitochondrial membrane ATP synthase (F(1)F(0) ATP synthase or Complex V) produces ATP from ADP in the presence of a proton gradient across the membrane which is generated by electron transport complexes of the respiratory chain. F-type ATPases consist of two structural domains, F(1) - containing the extramembraneous catalytic core, and F(0) - containing the membrane proton channel, linked together by a central stalk and a peripheral stalk. During catalysis, ATP synthesis in the catalytic domain of F(1) is coupled via a rotary mechanism of the central stalk subunits to proton translocation. Subunits alpha and beta form the catalytic core in F(1). Rotation of the central stalk against the surrounding alpha(3)beta(3) subunits leads to hydrolysis of ATP in three separate catalytic sites on the beta subunits. Subunit alpha does not bear the catalytic high-affinity ATP-binding sites. This is ATP synthase subunit alpha, mitochondrial (ATPA) from Raphanus sativus (Radish).